The chain runs to 410 residues: Adenosylhomocysteinase (410 aa).

Substrate contacts are provided by aspartate 117 and glutamate 142. Residue 143–145 (TTT) coordinates NAD(+). Substrate contacts are provided by lysine 172 and aspartate 176. Residues asparagine 177, 206-211 (GYGYCG), glutamate 229, 285-287 (AGH), and asparagine 332 contribute to the NAD(+) site.

It belongs to the adenosylhomocysteinase family. NAD(+) serves as cofactor.

The protein localises to the cytoplasm. It carries out the reaction S-adenosyl-L-homocysteine + H2O = L-homocysteine + adenosine. The protein operates within amino-acid biosynthesis; L-homocysteine biosynthesis; L-homocysteine from S-adenosyl-L-homocysteine: step 1/1. In terms of biological role, may play a key role in the regulation of the intracellular concentration of adenosylhomocysteine. The protein is Adenosylhomocysteinase of Thermoplasma acidophilum (strain ATCC 25905 / DSM 1728 / JCM 9062 / NBRC 15155 / AMRC-C165).